We begin with the raw amino-acid sequence, 102 residues long: Large ribosomal subunit protein bL21 (102 aa).

Belongs to the bacterial ribosomal protein bL21 family. Part of the 50S ribosomal subunit. Contacts protein L20.

In terms of biological role, this protein binds to 23S rRNA in the presence of protein L20. This chain is Large ribosomal subunit protein bL21, found in Sorangium cellulosum (strain So ce56) (Polyangium cellulosum (strain So ce56)).